We begin with the raw amino-acid sequence, 191 residues long: Uridylate kinase (191 aa).

12-17 (GAGKGT) provides a ligand contact to ATP. An NMP region spans residues 33-63 (SAGDCLREEQNRPGSKYGNLIKEYIKDGKIV). A ribonucleoside 5'-phosphate is bound by residues Arg39, 61-63 (KIV), 91-94 (GFPR), and Gln98. The interval 128–138 (HRGKTSGRSDD) is LID. Arg129 provides a ligand contact to ATP. The a ribonucleoside 5'-phosphate site is built by Arg135 and Arg146. ATP is bound at residue Gln174.

The protein belongs to the adenylate kinase family. UMP-CMP kinase subfamily. As to quaternary structure, monomer. Mg(2+) is required as a cofactor.

It localises to the cytoplasm. The protein resides in the nucleus. The enzyme catalyses UMP + ATP = UDP + ADP. Catalyzes the phosphorylation of pyrimidine nucleoside monophosphates at the expense of ATP. Plays an important role in de novo pyrimidine nucleotide biosynthesis. Has preference for UMP and dUMP as phosphate acceptors, but can also use CMP, dCMP and AMP. The polypeptide is Uridylate kinase (Schizosaccharomyces pombe (strain 972 / ATCC 24843) (Fission yeast)).